The following is a 728-amino-acid chain: MSNETKCPFNHTAGSGTTNKDWWPNQLNLNVLHRHSALSDPMDPDFDYAEAFKKLDLAAVKQDLHALMTTSQDWWPADFGHYGGLFVRMAWHSAGTYRTADGRGGAGGGQQRFAPLNSWPDNVSLDKARRLLWPIKQKYGRNISWADLLILTGNVALESMGFKTFGYAGGRADTWEPDDVYWGSEKIWLELSGGPNSRYTGKRELESPLAAVQMGLIYVNPEGPDGNPDPVAAAHDIRETFARMAMNDEETVALIAGGHTFGKTHGAGPASNVGPEPEAAGLEEQGLGWKSTFGTGKGKDTITSGLEVTWTSTPTKWSNDFFKHLFSYEWELTKSPAGAHQWVAKDAGEVIPDAYDASKKHRPTMLTTDLSLRFDPAYEKISRRFYENPAEFADAFARAWFKLTHRDMGPRARYLGPEVPAEHLLWQDPIPAVDHPLIDAADVAALKAKVLATGLSVSQLVSTAWASAATFRGSDKRGGANGARIRLAPQKDWEVNQPAALATVLETLEGVQKAFNDAQTDGKKVSLADLIVLAGAAGVEQAAKNAGIAISVPFAPGRMDASQEETDVDAMAVLEPVADGFRNYLKSAYKTPAEALLVDKAQLLTLTAPEMTVLVGGLRVLGANVGDSKHGVFTDRPGTLSNDFFANLLDMGTEWKPVSAANDVFEGRDRATGAVKWTGTRVDLIFGSHSQLRALAEVYGSADAQEKFVRDFVAAWNKVMNLDRFDLA.

A cross-link (tryptophyl-tyrosyl-methioninium (Trp-Tyr) (with M-244)) is located at residues 91–218 (WHSAGTYRTA…LAAVQMGLIY (128 aa)). The active-site Proton acceptor is the His-92. Positions 218–244 (YVNPEGPDGNPDPVAAAHDIRETFARM) form a cross-link, tryptophyl-tyrosyl-methioninium (Tyr-Met) (with W-91). His-259 lines the heme b pocket.

This sequence belongs to the peroxidase family. Peroxidase/catalase subfamily. Homodimer or homotetramer. Heme b serves as cofactor. Formation of the three residue Trp-Tyr-Met cross-link is important for the catalase, but not the peroxidase activity of the enzyme.

It catalyses the reaction H2O2 + AH2 = A + 2 H2O. The catalysed reaction is 2 H2O2 = O2 + 2 H2O. Functionally, bifunctional enzyme with both catalase and broad-spectrum peroxidase activity. The polypeptide is Catalase-peroxidase 1 (Burkholderia cenocepacia (strain HI2424)).